The following is a 218-amino-acid chain: CD99 antigen-like protein 2 (218 aa).

The N-terminal stretch at 1–25 is a signal peptide; it reads MVAWRSAFLVCLAFSLATLVQRGSG. The Extracellular segment spans residues 26–136; the sequence is DFDDFNLKDA…PGSGMVAETG (111 aa). The tract at residues 72–128 is disordered; the sequence is LADALDDRNDRDDGRRKPIAGGGGFSDKDLEDIVGGGEYKPDKGKGDGRYGSNDDPG. 2 stretches are compositionally biased toward basic and acidic residues: residues 76 to 87 and 110 to 119; these read LDDRNDRDDGRR and YKPDKGKGDG. O-linked (Xyl...) (chondroitin sulfate) serine glycosylation is present at S129. A helical membrane pass occupies residues 137–157; sequence TIAGVASALAMALIGAVSSYI. Topologically, residues 158-218 are cytoplasmic; sequence SYQQKKFCFS…EPPPSEPARI (61 aa).

Belongs to the CD99 family. In terms of processing, O-glycosylated.

Its subcellular location is the cell membrane. The protein resides in the cell junction. It is found in the secreted. In terms of biological role, plays a role in a late step of leukocyte extravasation helping cells to overcome the endothelial basement membrane. Acts at the same site as, but independently of, PECAM1. Homophilic adhesion molecule, but these interactions may not be required for cell aggregation. The protein is CD99 antigen-like protein 2 (CD99L2) of Pongo abelii (Sumatran orangutan).